The primary structure comprises 109 residues: Tektin-3 (109 aa).

It belongs to the tektin family. As to quaternary structure, microtubule inner protein component of sperm flagellar doublet microtubules. Interacts with TEKT1, TEKT2, TEKT4 and TEKT5. Interacts with CCDC38. N- and O-glycosylated. Post-translationally, may be proteolytically processed during the epididymal transit of spermatozoa. In terms of processing, ubiquitinated, leading to its degradation. Deubiquitinated by USP16, promoting its stability.

The protein resides in the cytoplasm. The protein localises to the cytoskeleton. It is found in the cilium axoneme. Its subcellular location is the flagellum axoneme. It localises to the cytoplasmic vesicle. The protein resides in the secretory vesicle. The protein localises to the acrosome outer membrane. Functionally, microtubule inner protein (MIP) part of the dynein-decorated doublet microtubules (DMTs) in cilia and flagellar axoneme. Forms filamentous polymers in the walls of ciliary and flagellar microtubules. Required for normal sperm mobility. The sequence is that of Tektin-3 from Mesocricetus auratus (Golden hamster).